The sequence spans 256 residues: Geranylgeranylglyceryl phosphate synthase (256 aa).

2 residues coordinate Mg(2+): aspartate 28 and serine 53. Residues 172 to 178, 203 to 204, and 225 to 226 each bind sn-glycerol 1-phosphate; these read YLEAGSG, GG, and GT.

Belongs to the GGGP/HepGP synthase family. Group II subfamily. The cofactor is Mg(2+).

Its subcellular location is the cytoplasm. It carries out the reaction sn-glycerol 1-phosphate + (2E,6E,10E)-geranylgeranyl diphosphate = sn-3-O-(geranylgeranyl)glycerol 1-phosphate + diphosphate. Its pathway is membrane lipid metabolism; glycerophospholipid metabolism. In terms of biological role, prenyltransferase that catalyzes the transfer of the geranylgeranyl moiety of geranylgeranyl diphosphate (GGPP) to the C3 hydroxyl of sn-glycerol-1-phosphate (G1P). This reaction is the first ether-bond-formation step in the biosynthesis of archaeal membrane lipids. The polypeptide is Geranylgeranylglyceryl phosphate synthase (Methanococcus maripaludis (strain C5 / ATCC BAA-1333)).